Reading from the N-terminus, the 164-residue chain is Phosphopantetheine adenylyltransferase (164 aa).

Position 9 (Ser9) interacts with substrate. ATP is bound by residues 9-10 (SF) and His17. Residues Lys41, Val78, and Arg92 each contribute to the substrate site. ATP-binding positions include 93 to 95 (GLR), Glu103, and 128 to 134 (VRTITAT).

Belongs to the bacterial CoaD family. As to quaternary structure, homohexamer. Mg(2+) is required as a cofactor.

Its subcellular location is the cytoplasm. The enzyme catalyses (R)-4'-phosphopantetheine + ATP + H(+) = 3'-dephospho-CoA + diphosphate. Its pathway is cofactor biosynthesis; coenzyme A biosynthesis; CoA from (R)-pantothenate: step 4/5. Its function is as follows. Reversibly transfers an adenylyl group from ATP to 4'-phosphopantetheine, yielding dephospho-CoA (dPCoA) and pyrophosphate. The polypeptide is Phosphopantetheine adenylyltransferase (Brucella abortus (strain 2308)).